Reading from the N-terminus, the 262-residue chain is Ribose-5-phosphate isomerase A (262 aa).

Substrate is bound by residues 33–36 (TGST), 89–92 (DGAD), and 102–105 (KGGG). Residue Glu-111 is the Proton acceptor of the active site. Lys-129 lines the substrate pocket.

It belongs to the ribose 5-phosphate isomerase family. In terms of assembly, homodimer.

It catalyses the reaction aldehydo-D-ribose 5-phosphate = D-ribulose 5-phosphate. It participates in carbohydrate degradation; pentose phosphate pathway; D-ribose 5-phosphate from D-ribulose 5-phosphate (non-oxidative stage): step 1/1. Catalyzes the reversible conversion of ribose-5-phosphate to ribulose 5-phosphate. The chain is Ribose-5-phosphate isomerase A from Cereibacter sphaeroides (strain ATCC 17023 / DSM 158 / JCM 6121 / CCUG 31486 / LMG 2827 / NBRC 12203 / NCIMB 8253 / ATH 2.4.1.) (Rhodobacter sphaeroides).